The primary structure comprises 411 residues: Proline-responsive transcriptional activator PutR (411 aa).

It belongs to the CdaR family.

Functionally, activates transcription of the putBCP operon. Requires proline as a coactivator. This is Proline-responsive transcriptional activator PutR from Bacillus subtilis (strain 168).